The sequence spans 187 residues: Fibroblast growth factor 4A (187 aa).

Residues 1–22 form the signal peptide; it reads MTVPSALVPILLLGTAAVMVQC.

The protein belongs to the heparin-binding growth factors family.

The protein resides in the secreted. Its function is as follows. Plays an important role in the regulation of embryonic development, cell proliferation, and cell differentiation. Good candidate for an inducing factor with possible roles both in mesoderm induction at the blastula stage and in the formation of the anteroposterior axis at the gastrula stage. This Xenopus laevis (African clawed frog) protein is Fibroblast growth factor 4A (fgf4-a).